The sequence spans 128 residues: Aspartate 1-decarboxylase (128 aa).

The active-site Schiff-base intermediate with substrate; via pyruvic acid is the S25. S25 carries the post-translational modification Pyruvic acid (Ser). Residue T57 participates in substrate binding. Y58 functions as the Proton donor in the catalytic mechanism. Residue 73-75 (GSA) participates in substrate binding.

This sequence belongs to the PanD family. Heterooctamer of four alpha and four beta subunits. Pyruvate serves as cofactor. Post-translationally, is synthesized initially as an inactive proenzyme, which is activated by self-cleavage at a specific serine bond to produce a beta-subunit with a hydroxyl group at its C-terminus and an alpha-subunit with a pyruvoyl group at its N-terminus.

It localises to the cytoplasm. The enzyme catalyses L-aspartate + H(+) = beta-alanine + CO2. It functions in the pathway cofactor biosynthesis; (R)-pantothenate biosynthesis; beta-alanine from L-aspartate: step 1/1. In terms of biological role, catalyzes the pyruvoyl-dependent decarboxylation of aspartate to produce beta-alanine. This Burkholderia thailandensis (strain ATCC 700388 / DSM 13276 / CCUG 48851 / CIP 106301 / E264) protein is Aspartate 1-decarboxylase.